Consider the following 984-residue polypeptide: Zinc finger and BTB domain-containing protein 4 (984 aa).

One can recognise a BTB domain in the interval 30–131 (CDVTLIAGDT…IYSARLALPG (102 aa)). Lys-40 participates in a covalent cross-link: Glycyl lysine isopeptide (Lys-Gly) (interchain with G-Cter in SUMO2). 3 disordered regions span residues 71–104 (TGGSAPSPATTTAASSSSSPPPPASPHSSSPPRV), 172–210 (MVTSEPNEDSLGPGLRTDGGWEGDKAEPLTPDSQPRRPF), and 227–262 (THEAQCRRGSNTRGSAGLGPGGSGPGGPAGVDASAL). A compositionally biased stretch (low complexity) spans 74–88 (SAPSPATTTAASSSS). The segment at 165 to 324 (VPPAPSSMVT…CRYCEKVFAL (160 aa)) is interaction with CBFA2T3. Residues 210-232 (FPCPRCGKSFIHPKRLQTHEAQC) form a C2H2-type 1; atypical zinc finger. Gly residues predominate over residues 242 to 255 (AGLGPGGSGPGGPA). C2H2-type zinc fingers lie at residues 285-307 (YVCAACERSYVTLSSLKRHSNVH), 313-335 (YPCRYCEKVFALAEYRTKHEVWH), and 341-364 (YQCIFCWETFVTYYNLKTHQRAFH). Ser-367 is subject to Phosphoserine. The segment at 461 to 575 (GSSSSGAAGG…GSSQLQAPPP (115 aa)) is disordered. The span at 467-477 (AAGGGPVGTGG) shows a compositional bias: gly residues. Composition is skewed to low complexity over residues 478–488 (SQAASVITYTT) and 507–529 (ATPTSPASTAVIPATAAGPATAT). Residue Lys-548 forms a Glycyl lysine isopeptide (Lys-Gly) (interchain with G-Cter in SUMO2) linkage. Over residues 552 to 565 (GVSGSGGSPTGTGR) the composition is skewed to gly residues. Residue Lys-590 forms a Glycyl lysine isopeptide (Lys-Gly) (interchain with G-Cter in SUMO2) linkage. Disordered stretches follow at residues 593–696 (ISET…GERR), 713–734 (RKHQEAHSGGSHNSRTGRRSST), 756–836 (QRHA…VAGG), 853–876 (GGSRDPGAGKGKPGNEGPVGASEG), and 947–984 (QTAPPTPPTPPPPLPLPVPPKGVGEMTGVERTQKGDVG). The segment covering 604–627 (SGEEVEESEEEEEEEEEEDQEDQE) has biased composition (acidic residues). A compositionally biased stretch (basic and acidic residues) spans 628–637 (ESKAGGEDQL). C2H2-type zinc fingers lie at residues 697–719 (HRCGDCAQAFATLRKLRKHQEAH) and 736–758 (FTCPHCAKVCKTAAALNRHGQRH). Residues Thr-766 and Thr-768 each carry the phosphothreonine; by HIPK2 modification. Residues 807 to 819 (AAAAAAEASESAS) are compositionally biased toward low complexity. A compositionally biased stretch (pro residues) spans 948–966 (TAPPTPPTPPPPLPLPVPP). Thr-955 bears the Phosphothreonine; by HIPK2 mark.

As to quaternary structure, interacts with HIPK2. Interacts with CBFA2T3. Interacts with ZBTB38. Post-translationally, phosphorylated by HIPK2. This phosphorylation reduces stability and triggers ZBTB4 protein degradation in response to DNA damage.

It localises to the nucleus. Its subcellular location is the chromosome. In terms of biological role, transcriptional repressor with bimodal DNA-binding specificity. Represses transcription in a methyl-CpG-dependent manner. Binds with a higher affinity to methylated CpG dinucleotides in the consensus sequence 5'-CGCG-3' but can also bind to the non-methylated consensus sequence 5'-CTGCNA-3' also known as the consensus kaiso binding site (KBS). Can also bind specifically to a single methyl-CpG pair and can bind hemimethylated DNA but with a lower affinity compared to methylated DNA. Plays a role in postnatal myogenesis, may be involved in the regulation of satellite cells self-renewal. The polypeptide is Zinc finger and BTB domain-containing protein 4 (Zbtb4) (Rattus norvegicus (Rat)).